Reading from the N-terminus, the 440-residue chain is Trigger factor (440 aa).

In terms of domain architecture, PPIase FKBP-type spans 160-253 (KDTVIGDALR…VTEVKRLELP (94 aa)).

This sequence belongs to the FKBP-type PPIase family. Tig subfamily.

It is found in the cytoplasm. It catalyses the reaction [protein]-peptidylproline (omega=180) = [protein]-peptidylproline (omega=0). Its function is as follows. Involved in protein export. Acts as a chaperone by maintaining the newly synthesized protein in an open conformation. Functions as a peptidyl-prolyl cis-trans isomerase. This chain is Trigger factor, found in Chlorobium chlorochromatii (strain CaD3).